The following is a 398-amino-acid chain: Argininosuccinate synthase (398 aa).

8-16 is a binding site for ATP; it reads AYSGGLDTS. L-citrulline is bound at residue Tyr87. Residue Gly117 coordinates ATP. The L-aspartate site is built by Thr119, Asn123, and Asp124. Asn123 is an L-citrulline binding site. Positions 127, 175, 260, and 272 each coordinate L-citrulline.

This sequence belongs to the argininosuccinate synthase family. Type 1 subfamily. As to quaternary structure, homotetramer.

The protein localises to the cytoplasm. The catalysed reaction is L-citrulline + L-aspartate + ATP = 2-(N(omega)-L-arginino)succinate + AMP + diphosphate + H(+). It participates in amino-acid biosynthesis; L-arginine biosynthesis; L-arginine from L-ornithine and carbamoyl phosphate: step 2/3. The chain is Argininosuccinate synthase from Mycobacterium ulcerans (strain Agy99).